Here is a 205-residue protein sequence, read N- to C-terminus: MSKFVVGLTGGIGSGKTTVANLFAEEGICLVDADVVAREVVAPGTHGLNAIISHFGTEMLTASGELDRAKLRQRVFNDEQERQWLNQLLHPMIRQEMLLQVEKATSDYVIMVVPLLFENGLDRLVHRTLVVDISPELQISRTVQRDNVDATQVNNIINSQCSRSEKLARADDIIDNHGEISRLKREVHALHQRYLQLSGNHNAHD.

The region spanning 5 to 201 is the DPCK domain; the sequence is VVGLTGGIGS…QRYLQLSGNH (197 aa). Residue 13–18 coordinates ATP; sequence GSGKTT.

This sequence belongs to the CoaE family.

The protein resides in the cytoplasm. The catalysed reaction is 3'-dephospho-CoA + ATP = ADP + CoA + H(+). It functions in the pathway cofactor biosynthesis; coenzyme A biosynthesis; CoA from (R)-pantothenate: step 5/5. Functionally, catalyzes the phosphorylation of the 3'-hydroxyl group of dephosphocoenzyme A to form coenzyme A. This is Dephospho-CoA kinase from Shewanella oneidensis (strain ATCC 700550 / JCM 31522 / CIP 106686 / LMG 19005 / NCIMB 14063 / MR-1).